We begin with the raw amino-acid sequence, 1886 residues long: Nuclear pore membrane glycoprotein 210 (1886 aa).

The first 26 residues, 1-26 (MARASLVQPALWALLLLQVVGPAAAA), serve as a signal peptide directing secretion. Over 27 to 1808 (KLNIPKVLLP…LLSHFLDSYQ (1782 aa)) the chain is Perinuclear space. Residues asparagine 44, asparagine 337, asparagine 405, asparagine 484, asparagine 681, asparagine 801, asparagine 926, asparagine 1039, asparagine 1116, asparagine 1135, asparagine 1362, and asparagine 1441 are each glycosylated (N-linked (GlcNAc...) asparagine). Residues 1078–1151 (FPPFRLIPRK…VQAVDAETGK (74 aa)) enclose the BIG2 domain. Residues 1809–1829 (VMFFTFFALLAGTAVTIIAYH) traverse the membrane as a helical segment. Over 1830-1886 (TVCAPRELASPLALTPRASPQHSPHYLASSPAAFNTLPSGRKASPPSGLWSPAYASH) the chain is Cytoplasmic. Serine 1839 is subject to Phosphoserine. Threonine 1844 carries the phosphothreonine modification. Phosphoserine occurs at positions 1873, 1876, 1880, and 1885.

It belongs to the NUP210 family. As to quaternary structure, forms dimers and possibly higher-order oligomers. N-glycosylated, but not all potential glycosylation sites may be used. Contains high-mannose type oligosaccharides. Post-translationally, phosphorylated at Ser-1880 in mitosis specifically; not phosphorylated in interphase.

The protein resides in the nucleus. Its subcellular location is the nuclear pore complex. It is found in the nucleus membrane. The protein localises to the endoplasmic reticulum membrane. In terms of biological role, nucleoporin essential for nuclear pore assembly and fusion, nuclear pore spacing, as well as structural integrity. In Mus musculus (Mouse), this protein is Nuclear pore membrane glycoprotein 210 (Nup210).